A 73-amino-acid chain; its full sequence is Mu-conotoxin PIIIA (73 aa).

The signal sequence occupies residues 1–19 (MSKLGVLLTICLLLFPITA). The propeptide occupies 20–49 (LPMDGDQPADRLAERMQDNISSEEHPFEKR). Pyrrolidone carboxylic acid is present on glutamine 50. Disulfide bonds link cysteine 53/cysteine 65, cysteine 53/cysteine 70, cysteine 54/cysteine 70, cysteine 54/cysteine 71, cysteine 60/cysteine 65, and cysteine 60/cysteine 71. A 4-hydroxyproline modification is found at proline 57. Proline 67 is subject to 4-hydroxyproline. A Cysteine amide modification is found at cysteine 71.

It belongs to the conotoxin M superfamily. Post-translationally, 3D-structure of 3 disulfide-bond connectivities isomers is described (PIIIA-1 (C1-C5, C2-C6, C3-C4), PIIIA-2 (C1-C4, C2-C5, C3-C6) and PIIIA-3 (C1-C2, C3-C4, C5-C6)). Only PIIIA-2 contains the cysteine connectivity described as typical for native mu-conotoxins. However, PIIIA-1 is more potent than PIIIA-2, suggesting another possible disulfid connectivity. For this reason, both connectivities have been indicated in features. As to expression, expressed by the venom duct.

The protein localises to the secreted. Its function is as follows. Mu-conotoxins block voltage-gated sodium channels (Nav). This toxin potently blocks rNav1.4/SCN4A (IC(50)=36-41 nM). It also moderately blocks rNav1.1/SCN1A (IC(50)=120 nM), rNav1.2/SCN2A (IC(50)=620 nM), rNav1.3/SCN3A (IC(50)=3.2 uM), mNav1.6/SCN8A (IC(50)=100 nM). This inhibition is reversible. The block of Nav1.1, Nav1.2, and Nav1.6 is modified when beta-subunits are coexpressed with alpha subunits. Hence, blocks of channels containing the beta-1 and beta-3 subunits are more potent (compared to channels without beta subunits), whereas blocks of channels containing the beta-2 and beta-4 are less potent (compared to channels without beta subunits). In vivo, this peptide causes flaccid paralysis in both mice and fish. In Conus purpurascens (Purple cone), this protein is Mu-conotoxin PIIIA.